A 421-amino-acid polypeptide reads, in one-letter code: Expansin-like protein DDB_G0293186 (421 aa).

Positions 1–20 (MRTLKLIILLILSTFKTINS) are cleaved as a signal peptide. N19 is a glycosylation site (N-linked (GlcNAc...) asparagine). The Expansin-like EG45 domain occupies 43-139 (GGQCGLPLPG…QKVSCGFSGY (97 aa)). 2 cysteine pairs are disulfide-bonded: C46-C70 and C73-C134. 2 N-linked (GlcNAc...) asparagine glycosylation sites follow: N117 and N391.

This sequence belongs to the expansin family. Expansin A subfamily.

It is found in the secreted. Its function is as follows. May serve to lubricate the movement of the cellulose microfibrils during cell growth and wall extension and/or may serve to maintain the fluid state of the slug cell wall. The protein is Expansin-like protein DDB_G0293186 of Dictyostelium discoideum (Social amoeba).